A 658-amino-acid polypeptide reads, in one-letter code: Methionine--tRNA ligase (658 aa).

The 'HIGH' region motif lies at 9 to 19 (PYANGKAHVGH). Positions 140, 143, 152, and 156 each coordinate Zn(2+). Positions 322–326 (TFSKS) match the 'KMSKS' region motif. Lys325 is an ATP binding site. One can recognise a tRNA-binding domain in the interval 558–658 (DFQKLDIRIG…KEVEPGTRVC (101 aa)).

It belongs to the class-I aminoacyl-tRNA synthetase family. MetG type 1 subfamily. Homodimer. The cofactor is Zn(2+).

It is found in the cytoplasm. It catalyses the reaction tRNA(Met) + L-methionine + ATP = L-methionyl-tRNA(Met) + AMP + diphosphate. Is required not only for elongation of protein synthesis but also for the initiation of all mRNA translation through initiator tRNA(fMet) aminoacylation. The sequence is that of Methionine--tRNA ligase from Archaeoglobus fulgidus (strain ATCC 49558 / DSM 4304 / JCM 9628 / NBRC 100126 / VC-16).